A 395-amino-acid polypeptide reads, in one-letter code: Mevalonate kinase (395 aa).

ATP-binding positions include Lys-13, Asn-55, Asn-104, Ser-135, and 140-146; that span reads GAGLGSS. Residue Ser-146 is the Proton donor of the active site. Residues Ser-146 and Glu-193 each coordinate Mg(2+). Asp-204 (proton acceptor) is an active-site residue.

Belongs to the GHMP kinase family. Mevalonate kinase subfamily. In terms of assembly, homodimer. Mg(2+) is required as a cofactor.

The protein resides in the cytoplasm. It localises to the peroxisome. The catalysed reaction is (R)-mevalonate + ATP = (R)-5-phosphomevalonate + ADP + H(+). The protein operates within isoprenoid biosynthesis; isopentenyl diphosphate biosynthesis via mevalonate pathway; isopentenyl diphosphate from (R)-mevalonate: step 1/3. Farnesyl pyrophosphate and geranyl pyrophosphate inhibit mevalonate kinase activity by binding competitively at the ATP-binding sites. In terms of biological role, catalyzes the phosphorylation of mevalonate to mevalonate 5-phosphate, a key step in isoprenoid and cholesterol biosynthesis. This is Mevalonate kinase from Mus musculus (Mouse).